We begin with the raw amino-acid sequence, 240 residues long: Insulin-like growth factor-binding protein 6 (240 aa).

Positions 1–27 are cleaved as a signal peptide; that stretch reads MTPHRLLPPLLLLLALLLAASPGGALA. The 80-residue stretch at 28-107 folds into the IGFBP N-terminal domain; sequence RCPGCGQGVQ…LLGRGRCLPA (80 aa). 5 disulfides stabilise this stretch: C29-C32, C40-C44, C57-C63, C71-C84, and C78-C104. The interval 109–160 is disordered; it reads APAVAEENPKESKPQAGTARPQDVNRRDQQRNPGTSTTPSQPNSAGVQDTEM. T126 carries an O-linked (HexNAc...) threonine glycan. Positions 139–155 are enriched in polar residues; sequence RNPGTSTTPSQPNSAGV. A glycan (O-linked (HexNAc...) serine) is linked at S144. O-linked (HexNAc...) threonine glycans are attached at residues T145 and T146. The O-linked (HexNAc...) serine glycan is linked to S152. Residues 160-234 form the Thyroglobulin type-1 domain; the sequence is MGPCRRHLDS…SPDGNGSSSC (75 aa). Cystine bridges form between C163-C190, C201-C212, and C214-C234. Residues 217 to 240 form a disordered region; the sequence is RMGKSLPGSPDGNGSSSCPTGSSG. A compositionally biased stretch (polar residues) spans 228–240; that stretch reads GNGSSSCPTGSSG.

As to quaternary structure, interacts (via C-terminal domain) with PHB2. Post-translationally, O-linked glycans consist of hexose (probably Gal), N-acetylhexosamine (probably GalNAc) and sialic acid residues. O-glycosylated with core 1 or possibly core 8 glycans. O-glycosylated on one site only in the region AA 143-168 in cerebrospinal fluid.

It is found in the secreted. Functionally, IGF-binding proteins prolong the half-life of the IGFs and have been shown to either inhibit or stimulate the growth promoting effects of the IGFs on cell culture. They alter the interaction of IGFs with their cell surface receptors. Activates the MAPK signaling pathway and induces cell migration. This is Insulin-like growth factor-binding protein 6 from Homo sapiens (Human).